We begin with the raw amino-acid sequence, 207 residues long: A-type ATP synthase subunit E (207 aa).

This sequence belongs to the V-ATPase E subunit family. In terms of assembly, has multiple subunits with at least A(3), B(3), C, D, E, F, H, I and proteolipid K(x).

The protein localises to the cell membrane. In terms of biological role, component of the A-type ATP synthase that produces ATP from ADP in the presence of a proton gradient across the membrane. This is A-type ATP synthase subunit E from Methanosphaera stadtmanae (strain ATCC 43021 / DSM 3091 / JCM 11832 / MCB-3).